Reading from the N-terminus, the 104-residue chain is Large ribosomal subunit protein uL24 (104 aa).

The protein belongs to the universal ribosomal protein uL24 family. As to quaternary structure, part of the 50S ribosomal subunit.

In terms of biological role, one of two assembly initiator proteins, it binds directly to the 5'-end of the 23S rRNA, where it nucleates assembly of the 50S subunit. One of the proteins that surrounds the polypeptide exit tunnel on the outside of the subunit. The protein is Large ribosomal subunit protein uL24 of Alteromonas mediterranea (strain DSM 17117 / CIP 110805 / LMG 28347 / Deep ecotype).